Reading from the N-terminus, the 118-residue chain is uncharacterized protein (118 aa).

This is an uncharacterized protein from Kitasatospora aureofaciens (Streptomyces aureofaciens).